A 306-amino-acid polypeptide reads, in one-letter code: BRCA2 and CDKN1A-interacting protein (306 aa).

Residues 1 to 10 (MASRPKRRAV) show a composition bias toward basic residues. Residues 1-45 (MASRPKRRAVSRVPPALGDEEEEDEVEEQDEDDSDEEEDEEDEVV) form a disordered region. Over residues 18-45 (GDEEEEDEVEEQDEDDSDEEEDEEDEVV) the composition is skewed to acidic residues. Residues S34 and S104 each carry the phosphoserine modification. Residues 51 to 159 (IEFEAYSISD…EKSMVEQLDR (109 aa)) are interaction with BRCA2. An interaction with CDKN1A region spans residues 153–251 (MVEQLDRLFN…NAEEEFFYEK (99 aa)). S273 carries the post-translational modification Phosphoserine.

The protein belongs to the BCP1 family. Interacts with BRCA2, CDKN1A and MTDH/LYRIC. Interacts with DCTN1/p150-glued and ACTR1A/ARP1. Interacts with alpha-, beta- and gamma-tubulins. Interacts with TENT5C; the interaction has no effect on TENT5C poly(A) polymerase function.

Its subcellular location is the nucleus. The protein resides in the cytoplasm. The protein localises to the cytoskeleton. It is found in the microtubule organizing center. It localises to the centrosome. Its subcellular location is the centriole. The protein resides in the spindle pole. Its function is as follows. During interphase, required for microtubule organizing and anchoring activities. During mitosis, required for the organization and stabilization of the spindle pole. May promote cell cycle arrest by enhancing the inhibition of CDK2 activity by CDKN1A. May be required for repair of DNA damage by homologous recombination in conjunction with BRCA2. May not be involved in non-homologous end joining (NHEJ). The polypeptide is BRCA2 and CDKN1A-interacting protein (BCCIP) (Bos taurus (Bovine)).